The primary structure comprises 798 residues: Galactinol--sucrose galactosyltransferase (798 aa).

This sequence belongs to the glycosyl hydrolases 36 family.

The catalysed reaction is alpha-D-galactosyl-(1-&gt;3)-1D-myo-inositol + sucrose = raffinose + myo-inositol. With respect to regulation, inhibited by 1-deoxygalactonojirimycin. Not inhibited by stachyose. Strong inhibition of the hydrolytic activity by sucrose. Its function is as follows. Transglycosidase operating by a ping-pong reaction mechanism. Involved in the synthesis of raffinose, a major soluble carbohydrate in seeds, roots and tubers. Able to utilize D-ononitol and D-pinitol as acceptors. May also act as a glycoside hydrolase. In Pisum sativum (Garden pea), this protein is Galactinol--sucrose galactosyltransferase (RFS).